Here is a 479-residue protein sequence, read N- to C-terminus: Neuronal acetylcholine receptor subunit alpha-9 (479 aa).

The first 25 residues, 1-25 (MNRPHSCLSFCWMYFAASGIRAVET), serve as a signal peptide directing secretion. Topologically, residues 26 to 237 (ANGKYAQKLF…TFTLLLKRRS (212 aa)) are extracellular. N-linked (GlcNAc...) asparagine glycosylation is present at Asn57. A disulfide bond links Cys155 and Cys169. Asn170 carries an N-linked (GlcNAc...) asparagine glycan. Positions 191 and 193 each coordinate Na(+). Cys219 and Cys220 are disulfide-bonded. The next 3 membrane-spanning stretches (helical) occupy residues 238 to 262 (SFYI…FYLP), 269 to 287 (VSLG…LMVA), and 302 to 323 (YYIA…VMNI). At 324 to 457 (HFCGAEARPV…WKKVAKVIDR (134 aa)) the chain is on the cytoplasmic side. Residues 458–476 (FFMWIFFAMVFVMTVLIIA) traverse the membrane as a helical segment.

The protein belongs to the ligand-gated ion channel (TC 1.A.9) family. Acetylcholine receptor (TC 1.A.9.1) subfamily. Alpha-9/CHRNA9 sub-subfamily. Forms homo- or heterooligomeric channels in conjunction with CHRNA10. The native outer hair cell receptor may be composed of CHRNA9:CHRNA10 heterooligomers. Found in the stoichiometric form (CHRNA9)2:(CHRNA10)3. As to expression, detected in the nasal epithelium, in the outer hair cells of the cochlea, in the pars tuberalis of the hypophysis, and in the developing muscle of the tongue. Also expressed in the neurons of dorsal root ganglia.

The protein localises to the synaptic cell membrane. It is found in the cell membrane. The enzyme catalyses Ca(2+)(in) = Ca(2+)(out). The catalysed reaction is Mg(2+)(in) = Mg(2+)(out). It carries out the reaction K(+)(in) = K(+)(out). It catalyses the reaction Na(+)(in) = Na(+)(out). Activated by a myriad of ligands such as acetylcholine. AChR activity is inhibited by the antagonist alpha-conotoxins RgIA and GeXXA, small disulfide-constrained peptides from cone snails. In terms of biological role, component of neuronal acetylcholine receptors (nAChRs) that function as pentameric, ligand-gated cation channels with high calcium permeability among other activities. nAChRs are excitatory neurotrasnmitter receptors formed by a collection of nAChR subunits known to mediate synaptic transmission in the nervous system and the neuromuscular junction. Each nAchR subunit confers differential attributes to channel properties, including activation, deactivation and desensitization kinetics, pH sensitivity, cation permeability, and binding to allosteric modulators. Forms either homopentamers or heteropentamers with CHRNA10. Expressed in the inner ear, in sympathetic neurons and in other non-neuronal cells, such as skin keratinocytes and lymphocytes. nAChR formed by CHRNA9:CHRNA10 mediate central nervous system control of auditory and vestibular sensory processing. The channel is permeable to a range of divalent cations including calcium, the influx of which may activate a potassium current which hyperpolarizes the cell membrane. In the ear, mediates synaptic transmission between efferent olivocochlear fibers and hair cells of the cochlea, this may lead to a reduction in basilar membrane motion, altering the activity of auditory nerve fibers and reducing the range of dynamic hearing. This may protect against acoustic trauma. May also regulate keratinocyte adhesion. This chain is Neuronal acetylcholine receptor subunit alpha-9 (Chrna9), found in Rattus norvegicus (Rat).